The sequence spans 160 residues: ATP synthase subunit b (160 aa).

The chain crosses the membrane as a helical span at residues 15-35; it reads LAIVIGVLFWFLRGFLGGILE.

It belongs to the ATPase B chain family. In terms of assembly, F-type ATPases have 2 components, F(1) - the catalytic core - and F(0) - the membrane proton channel. F(1) has five subunits: alpha(3), beta(3), gamma(1), delta(1), epsilon(1). F(0) has four main subunits: a(1), b(1), b'(1) and c(10-14). The alpha and beta chains form an alternating ring which encloses part of the gamma chain. F(1) is attached to F(0) by a central stalk formed by the gamma and epsilon chains, while a peripheral stalk is formed by the delta, b and b' chains.

The protein localises to the cellular thylakoid membrane. Its function is as follows. F(1)F(0) ATP synthase produces ATP from ADP in the presence of a proton or sodium gradient. F-type ATPases consist of two structural domains, F(1) containing the extramembraneous catalytic core and F(0) containing the membrane proton channel, linked together by a central stalk and a peripheral stalk. During catalysis, ATP synthesis in the catalytic domain of F(1) is coupled via a rotary mechanism of the central stalk subunits to proton translocation. In terms of biological role, component of the F(0) channel, it forms part of the peripheral stalk, linking F(1) to F(0). The chain is ATP synthase subunit b from Synechococcus sp. (strain CC9902).